The primary structure comprises 269 residues: uncharacterized protein (269 aa).

Residues 152–197 (RYFSKPAYRNAFKANTIRATTAYKKVFNDPSLGSTYPLEVPLGKMS) enclose the RPE1 insert domain.

This is an uncharacterized protein from Rickettsia prowazekii (strain Madrid E).